A 161-amino-acid chain; its full sequence is Regulator of ribonuclease activity A (161 aa).

It belongs to the RraA family. In terms of assembly, homotrimer. Binds to both RNA-binding sites in the C-terminal region of Rne and to RhlB.

Its subcellular location is the cytoplasm. Functionally, globally modulates RNA abundance by binding to RNase E (Rne) and regulating its endonucleolytic activity. Can modulate Rne action in a substrate-dependent manner by altering the composition of the degradosome. Modulates RNA-binding and helicase activities of the degradosome. The polypeptide is Regulator of ribonuclease activity A (Cronobacter sakazakii (strain ATCC BAA-894) (Enterobacter sakazakii)).